The primary structure comprises 531 residues: Apolipoprotein N-acyltransferase (531 aa).

7 helical membrane-spanning segments follow: residues 8-28, 34-54, 69-89, 105-125, 136-156, 178-198, and 207-227; these read IILL…LLAV, FGIF…IDGV, PAAI…WWLG, LAVV…VVIA, IAAL…VFTG, VVNL…PALI, and GLAI…YRLA. Positions 243–493 constitute a CN hydrolase domain; the sequence is VQPVIDQAKK…RGVLDTILPG (251 aa). Glu-287 functions as the Proton acceptor in the catalytic mechanism. Lys-351 is a catalytic residue. The active-site Nucleophile is the Cys-405. A helical transmembrane segment spans residues 507-527; sequence IFWLSMAILSIVASFSRFGFN.

It belongs to the CN hydrolase family. Apolipoprotein N-acyltransferase subfamily.

It localises to the cell inner membrane. It carries out the reaction N-terminal S-1,2-diacyl-sn-glyceryl-L-cysteinyl-[lipoprotein] + a glycerophospholipid = N-acyl-S-1,2-diacyl-sn-glyceryl-L-cysteinyl-[lipoprotein] + a 2-acyl-sn-glycero-3-phospholipid + H(+). It participates in protein modification; lipoprotein biosynthesis (N-acyl transfer). In terms of biological role, catalyzes the phospholipid dependent N-acylation of the N-terminal cysteine of apolipoprotein, the last step in lipoprotein maturation. This is Apolipoprotein N-acyltransferase from Sinorhizobium medicae (strain WSM419) (Ensifer medicae).